The primary structure comprises 115 residues: U17-barytoxin-Tl1c (115 aa).

The N-terminal stretch at 1–20 is a signal peptide; sequence MKTIIVFLSLLVLATKFGDA. Positions 21 to 74 are excised as a propeptide; the sequence is KEGVNQKQKKEVTQNEFREEYLNEMAAMSLVQQLEAIERALFENEAGRNSRQKR. Intrachain disulfides connect C75–C89, C82–C94, and C88–C109.

It belongs to the neurotoxin 14 (magi-1) family. 03 (ICK-30-40) subfamily. As to expression, expressed by the venom gland.

It is found in the secreted. Its function is as follows. Ion channel inhibitor. The protein is U17-barytoxin-Tl1c of Trittame loki (Brush-footed trapdoor spider).